The following is a 442-amino-acid chain: Proline--tRNA ligase (442 aa).

The protein belongs to the class-II aminoacyl-tRNA synthetase family. ProS type 2 subfamily. As to quaternary structure, homodimer.

The protein resides in the cytoplasm. It catalyses the reaction tRNA(Pro) + L-proline + ATP = L-prolyl-tRNA(Pro) + AMP + diphosphate. Functionally, catalyzes the attachment of proline to tRNA(Pro) in a two-step reaction: proline is first activated by ATP to form Pro-AMP and then transferred to the acceptor end of tRNA(Pro). In Chelativorans sp. (strain BNC1), this protein is Proline--tRNA ligase.